A 102-amino-acid chain; its full sequence is Urease subunit beta (102 aa).

This sequence belongs to the urease beta subunit family. Heterotrimer of UreA (gamma), UreB (beta) and UreC (alpha) subunits. Three heterotrimers associate to form the active enzyme.

The protein localises to the cytoplasm. It catalyses the reaction urea + 2 H2O + H(+) = hydrogencarbonate + 2 NH4(+). The protein operates within nitrogen metabolism; urea degradation; CO(2) and NH(3) from urea (urease route): step 1/1. This is Urease subunit beta from Pseudomonas savastanoi pv. phaseolicola (strain 1448A / Race 6) (Pseudomonas syringae pv. phaseolicola (strain 1448A / Race 6)).